The sequence spans 676 residues: Electrogenic aspartate/glutamate antiporter SLC25A13, mitochondrial (676 aa).

A2 carries the post-translational modification N-acetylalanine. The regulatory N-terminal domain stretch occupies residues 2 to 295; that stretch reads AAAKVALTKR…TLADIERIAP (294 aa). Over 2–332 the chain is Mitochondrial intermembrane; sequence AAAKVALTKR…LLQLAESAYR (331 aa). At K18 the chain carries N6-acetyllysine. EF-hand domains follow at residues 51 to 86, 87 to 122, 123 to 157, and 158 to 193; these read SQPN…SVLC, APDA…TTIH, QHIP…FLLE, and IQLE…IRPH. Residues D66, T68, D70, L72, and E77 each coordinate Ca(2+). The segment at 296-311 is linker loop domain; sequence LEEGMLPFNLAEAQRQ. Positions 322–613 are carrier domain; it reads FLLQLAESAY…LQRWFYVDFG (292 aa). Solcar repeat units lie at residues 327–419, 427–511, and 519–607; these read AESA…VRDK, VPLL…VKAS, and VSPG…LQRW. The helical transmembrane segment at 333 to 350 threads the bilayer; it reads FGLGSIAGAVGATAVYPI. Residues 351 to 393 are Mitochondrial matrix-facing; the sequence is DLVKTRMQNQRSTGSFVGELMYKNSFDCFKKVLRYEGFFGLYR. N6-acetyllysine is present on residues K354 and K373. Residues 394–413 form a helical membrane-spanning segment; it reads GLLPQLLGVAPEKAIKLTVN. Over 414 to 436 the chain is Mitochondrial intermembrane; sequence DFVRDKFMHKDGSVPLLAEIFAG. Residues 437–450 form a helical membrane-spanning segment; the sequence is GCAGGSQVIFTNPL. Over 451 to 485 the chain is Mitochondrial matrix; the sequence is EIVKIRLQVAGEITTGPRVSALSVVRDLGFFGIYK. K454 carries the post-translational modification N6-methyllysine. K485 bears the N6-acetyllysine; alternate mark. An N6-succinyllysine; alternate modification is found at K485. A helical transmembrane segment spans residues 486-505; it reads GAKACFLRDIPFSAIYFPCY. At 506 to 524 the chain is on the mitochondrial intermembrane side; the sequence is AHVKASFANEDGQVSPGSL. A helical membrane pass occupies residues 525–542; that stretch reads LLAGAIAGMPAASLVTPA. The Mitochondrial matrix portion of the chain corresponds to 543-581; that stretch reads DVIKTRLQVAARAGQTTYNGVTDCFRKILREEGPKALWK. K581 bears the N6-succinyllysine mark. A helical membrane pass occupies residues 582 to 601; sequence GVAARVFRSSPQFGVTLLTY. Topologically, residues 602–676 are mitochondrial intermembrane; that stretch reads ELLQRWFYVD…STSKVTAGDS (75 aa). The tract at residues 614–676 is C-terminal domain; the sequence is GVKPVGSEPV…STSKVTAGDS (63 aa). Position 663 is an N6-acetyllysine (K663). S667 carries the phosphoserine modification.

The protein belongs to the mitochondrial carrier (TC 2.A.29) family. In terms of assembly, homodimer (via N-terminus). As to expression, at 10.5 dpc, expressed in branchial arches, a well as in the limb and tail buds. At 13.5 dpc expression is predominant in epithelial structures and the forebrain, kidney and liver. Expression in liver is maintained into adulthood.

It is found in the mitochondrion inner membrane. It carries out the reaction L-aspartate(in) + L-glutamate(out) + H(+)(out) = L-aspartate(out) + L-glutamate(in) + H(+)(in). It catalyses the reaction 3-sulfino-L-alanine(out) + L-glutamate(in) + H(+)(in) = 3-sulfino-L-alanine(in) + L-glutamate(out) + H(+)(out). The enzyme catalyses 3-sulfino-L-alanine(out) + L-aspartate(in) = 3-sulfino-L-alanine(in) + L-aspartate(out). In terms of biological role, mitochondrial electrogenic aspartate/glutamate antiporter that favors efflux of aspartate and entry of glutamate and proton within the mitochondria as part of the malate-aspartate shuttle. Also mediates the uptake of L-cysteinesulfinate (3-sulfino-L-alanine) by mitochondria in exchange of L-glutamate and proton. Can also exchange L-cysteinesulfinate with aspartate in their anionic form without any proton translocation. Lacks transport activity towards gamma-aminobutyric acid (GABA). The chain is Electrogenic aspartate/glutamate antiporter SLC25A13, mitochondrial from Mus musculus (Mouse).